Here is a 354-residue protein sequence, read N- to C-terminus: MSAEARKTETIPEWKQEEIDELVAFLERYESVGVVDITGIPSRQLQDMRRDLHGTAALRVSRNTLMERALNEGGDGLGELVEHVEGQVGLIGTNDNPFGLYQQLEESKTPAPINAGEVAPNDIVIPEGDTGVDPGPFVGDLQQVGANARIEGGSIKVVEDSTVLSAGEEVSSDLSNVLSELGIEPKEVGLDLRGVSSEGVLFSPEELDIDVESYRTDIESAASAARNLSVNAEYPTARTAPSMLAKAAGEAKSVGLSAAVESPDLADDLVSKADAQVRALAAQIDDEEALPEELQDVEQPAAADSAAEADDEDDTGNVEQTDESDADDADDADDADDADEEDGDGGDALGDMFG.

Acidic residues-rich tracts occupy residues 286–296 (DEEALPEELQD) and 307–345 (AEADDEDDTGNVEQTDESDADDADDADDADDADEEDGDG). Residues 286–354 (DEEALPEELQ…GGDALGDMFG (69 aa)) are disordered.

It belongs to the universal ribosomal protein uL10 family. Part of the 50S ribosomal subunit. Forms part of the ribosomal stalk which helps the ribosome interact with GTP-bound translation factors. Forms a heptameric L10(L12)2(L12)2(L12)2 complex, where L10 forms an elongated spine to which the L12 dimers bind in a sequential fashion.

Functionally, forms part of the ribosomal stalk, playing a central role in the interaction of the ribosome with GTP-bound translation factors. In Natronomonas pharaonis (strain ATCC 35678 / DSM 2160 / CIP 103997 / JCM 8858 / NBRC 14720 / NCIMB 2260 / Gabara) (Halobacterium pharaonis), this protein is Large ribosomal subunit protein uL10.